We begin with the raw amino-acid sequence, 526 residues long: MSSTSQKRKKIQKKFKNRGYNLKFDALDEILVFADQFPDDDDGEAIDLLLDNLQETHKSSTVDAESVRGLINRLLGAHNAPEEPTTSASSLAIIDAFLVPKFGYDSVKKKFNEHTSSLPIHGEASAKTALYRERFMLLSQRVSRAEHFSRPAFDAEMSQFENNEISSIQSLISQRGRKWVMGVISQLEDGHFYLEDLSASVEIDLSKAKITTGFFTENTIILAEGEMQVNGIFQVITCGFPPLEDRDKTLKAHSEYDFFGGGTLTKEEMIKLADLERQAVNDTFVILSDIWLDDEEVMRKLETVLDGFESVETVPSLFVFMGNFCSRPCNLSFGSYSSLREQFGKLGRMIGNHPRLKENSRFLFIPGPEDAGPSTVLPRCALPKYLTEELRNIIPNAIFSSNPCRVKFYNQEIVFFRQDLLYRMRRSCLVTPSSEETNDPFKHLVYTITHQSHLCPLPLMVQPIIWNYDHALRLYPTPHTIVLGDKSEQEVCKFGGTTCFNPGSFSTDSTFVAYRPSTQEVELSAL.

This sequence belongs to the DNA polymerase epsilon subunit B family. In terms of assembly, subunit of the DNA polymerase II. Interacts with POL2A (via C-terminus).

Its subcellular location is the nucleus. Functionally, as accessory component of DNA polymerase II participates in chromosomal DNA replication. Required for the timing and determination of cell fate during plant embryogenesis and root pole development, by promoting cell cycle and cell type patterning. Necessary for proper shoot (SAM) and root apical meristem (RAM) functions. Is essential to promote the first divisions of the zygote. In Arabidopsis thaliana (Mouse-ear cress), this protein is DNA polymerase epsilon subunit B.